The following is a 234-amino-acid chain: Probable chemoreceptor glutamine deamidase CheD 1 (234 aa).

Belongs to the CheD family.

The enzyme catalyses L-glutaminyl-[protein] + H2O = L-glutamyl-[protein] + NH4(+). Functionally, probably deamidates glutamine residues to glutamate on methyl-accepting chemotaxis receptors (MCPs), playing an important role in chemotaxis. The protein is Probable chemoreceptor glutamine deamidase CheD 1 of Albidiferax ferrireducens (strain ATCC BAA-621 / DSM 15236 / T118) (Rhodoferax ferrireducens).